A 502-amino-acid chain; its full sequence is Bifunctional purine biosynthesis protein PurH (502 aa).

One can recognise an MGS-like domain in the interval 1–144 (MKKRALISVF…KNFQDVVVIS (144 aa)).

It belongs to the PurH family.

It catalyses the reaction (6R)-10-formyltetrahydrofolate + 5-amino-1-(5-phospho-beta-D-ribosyl)imidazole-4-carboxamide = 5-formamido-1-(5-phospho-D-ribosyl)imidazole-4-carboxamide + (6S)-5,6,7,8-tetrahydrofolate. The catalysed reaction is IMP + H2O = 5-formamido-1-(5-phospho-D-ribosyl)imidazole-4-carboxamide. It functions in the pathway purine metabolism; IMP biosynthesis via de novo pathway; 5-formamido-1-(5-phospho-D-ribosyl)imidazole-4-carboxamide from 5-amino-1-(5-phospho-D-ribosyl)imidazole-4-carboxamide (10-formyl THF route): step 1/1. It participates in purine metabolism; IMP biosynthesis via de novo pathway; IMP from 5-formamido-1-(5-phospho-D-ribosyl)imidazole-4-carboxamide: step 1/1. The sequence is that of Bifunctional purine biosynthesis protein PurH from Clostridium beijerinckii (strain ATCC 51743 / NCIMB 8052) (Clostridium acetobutylicum).